Consider the following 481-residue polypeptide: Glutamate--tRNA ligase 1 (481 aa).

The 'HIGH' region motif lies at 11–21 (PSPTGSLHIGG). The short motif at 244-248 (KLSKR) is the 'KMSKS' region element. Residue Lys247 participates in ATP binding.

It belongs to the class-I aminoacyl-tRNA synthetase family. Glutamate--tRNA ligase type 1 subfamily. Monomer.

The protein localises to the cytoplasm. It catalyses the reaction tRNA(Glu) + L-glutamate + ATP = L-glutamyl-tRNA(Glu) + AMP + diphosphate. Catalyzes the attachment of glutamate to tRNA(Glu) in a two-step reaction: glutamate is first activated by ATP to form Glu-AMP and then transferred to the acceptor end of tRNA(Glu). The sequence is that of Glutamate--tRNA ligase 1 from Caldanaerobacter subterraneus subsp. tengcongensis (strain DSM 15242 / JCM 11007 / NBRC 100824 / MB4) (Thermoanaerobacter tengcongensis).